Reading from the N-terminus, the 424-residue chain is MELTQENTEENEKTHVESIVKFEDSNRGTITDFHIETANNEEEKDANVILNKSVKMEVEEVNGHVDSSSTETDIEMQVIQQPTIPKKPPVSAHRRGPRKHRGNANSQLNLSTADHQRPLYCICQKPDDGSWMLGCDGCEDWFHGTCVNIPESYNDLTVQYFCPKCTEEGKGITTWKRKCRLRECSNPTRPNSNYCSDKHGVDFFREKVKLSTVEPSAIKNLVLFAKKREEFQNLGTVGPTLPSQVPPEVVYNFEIEEANRLNAEIVQLNKEKEVASNKKIFLQLIKDSSRRAVLAYKEREGIKKDLCGFDSRLLFNQQQMNELWEKVSNGAPLSLDMSIDPSPESTCFTEKRRCAKHTSWQVIFTEDFELQESNILQKLNMKQTAKDVMLEHQKQRCLPGIQYDGYARFCHEQLSPEKMANLLK.

A disordered region spans residues 80-108; that stretch reads QQPTIPKKPPVSAHRRGPRKHRGNANSQL. Positions 92–102 are enriched in basic residues; sequence AHRRGPRKHRG. The segment at 118–168 adopts a PHD-type zinc-finger fold; that stretch reads PLYCICQKPDDGSWMLGCDGCEDWFHGTCVNIPESYNDLTVQYFCPKCTEE.

Component of the Set1 complex composed of ash2, sdc1, set1, shg1, spp1, swd1, swd2 and swd3.

It is found in the nucleus. Its function is as follows. The Set1 complex specifically methylates 'Lys-4' of histone H3. This is Set1 complex component spp1 (spp1) from Schizosaccharomyces pombe (strain 972 / ATCC 24843) (Fission yeast).